We begin with the raw amino-acid sequence, 304 residues long: uncharacterized protein (304 aa).

NAD(+) is bound by residues glycine 136 to isoleucine 137, valine 215 to arginine 217, and aspartate 241. The active site involves arginine 217. The active site involves glutamate 246. Histidine 265 functions as the Proton donor in the catalytic mechanism. Histidine 265–asparagine 268 lines the NAD(+) pocket.

It belongs to the D-isomer specific 2-hydroxyacid dehydrogenase family.

This is an uncharacterized protein from Corynebacterium melassecola.